Reading from the N-terminus, the 341-residue chain is Glyceraldehyde-3-phosphate dehydrogenase, cytosolic (341 aa).

Residues 15–16, aspartate 37, and arginine 84 each bind NAD(+); that span reads RI. D-glyceraldehyde 3-phosphate-binding positions include 155 to 157, threonine 186, 215 to 216, and arginine 238; these read SCT and TG. The Nucleophile role is filled by cysteine 156. Asparagine 320 lines the NAD(+) pocket.

Belongs to the glyceraldehyde-3-phosphate dehydrogenase family. Homotetramer.

Its subcellular location is the cytoplasm. The catalysed reaction is D-glyceraldehyde 3-phosphate + phosphate + NAD(+) = (2R)-3-phospho-glyceroyl phosphate + NADH + H(+). It participates in carbohydrate degradation; glycolysis; pyruvate from D-glyceraldehyde 3-phosphate: step 1/5. Its function is as follows. Key enzyme in glycolysis that catalyzes the first step of the pathway by converting D-glyceraldehyde 3-phosphate (G3P) into 3-phospho-D-glyceroyl phosphate. Essential for the maintenance of cellular ATP levels and carbohydrate metabolism. In Magnolia liliiflora (Mulan magnolia), this protein is Glyceraldehyde-3-phosphate dehydrogenase, cytosolic (GAPC).